The primary structure comprises 317 residues: Transcriptional regulator LsrR (317 aa).

The segment at residues 33 to 56 is a DNA-binding region (H-T-H motif); sequence QSEISDRLGLTRLKVSRLLEKGHQ.

Belongs to the SorC transcriptional regulatory family.

It is found in the cytoplasm. Its activity is regulated as follows. Inactivated by phosphorylated autoinducer-2 (phospho-AI-2). Phospho-AI-2 acts by binding to LsrR, which is then unable to bind to the promoter regions, allowing the transcription of the target genes. Functionally, transcriptional regulator that represses the expression of the lsr operon in the absence of the quorum-sensing signaling molecule autoinducer 2 (AI-2). It also represses the expression of the lsrRK operon. Acts by binding directly to the lsrA and lsrR promoter regions. In the presence of phosphorylated autoinducer-2 (phospho-AI-2), LsrR is inactivated, leading to the transcription of the genes. This Escherichia coli O157:H7 protein is Transcriptional regulator LsrR (lsrR).